The primary structure comprises 370 residues: 3 beta-hydroxysteroid dehydrogenase/Delta 5--&gt;4-isomerase (370 aa).

Tyrosine 158 (proton acceptor) is an active-site residue. Lysine 162 is an NAD(+) binding site.

The protein belongs to the 3-beta-HSD family. As to quaternary structure, monomer.

Its subcellular location is the cytoplasm. It carries out the reaction a 3beta-hydroxy-Delta(5)-steroid + NAD(+) = a 3-oxo-Delta(5)-steroid + NADH + H(+). The enzyme catalyses cholesterol + NAD(+) = cholest-5-en-3-one + NADH + H(+). The catalysed reaction is pregnenolone + NAD(+) = pregn-5-ene-3,20-dione + NADH + H(+). It catalyses the reaction 3beta-hydroxyandrost-5-en-17-one + NAD(+) = androst-5-ene-3,17-dione + NADH + H(+). It carries out the reaction a 3-oxo-Delta(5)-steroid = a 3-oxo-Delta(4)-steroid. The enzyme catalyses cholest-5-en-3-one = cholest-4-en-3-one. The catalysed reaction is pregn-5-ene-3,20-dione = progesterone. It catalyses the reaction androst-5-ene-3,17-dione = androst-4-ene-3,17-dione. Its pathway is lipid metabolism; steroid biosynthesis. 3-beta-HSD is a bifunctional enzyme, that catalyzes the oxidation and isomerization of cholesterol, pregnenolone, and dehydroepiandrosterone (DHEA) into cholest-4-en-3-one, progesterone, and androsterone, respectively. The sequence is that of 3 beta-hydroxysteroid dehydrogenase/Delta 5--&gt;4-isomerase from Mycobacterium tuberculosis (strain CDC 1551 / Oshkosh).